Consider the following 325-residue polypeptide: Putative carboxypeptidase YocD (325 aa).

The active-site Nucleophile is the Ser111. Catalysis depends on charge relay system residues Glu228 and His296.

The protein belongs to the peptidase S66 family.

The polypeptide is Putative carboxypeptidase YocD (yocD) (Bacillus subtilis (strain 168)).